Here is a 301-residue protein sequence, read N- to C-terminus: Sulfate adenylyltransferase subunit 2 (301 aa).

Positions 279 to 301 (RQGRLIDHDQDGSMEKKKQEGYF) are disordered.

This sequence belongs to the PAPS reductase family. CysD subfamily. Heterodimer composed of CysD, the smaller subunit, and CysN.

The catalysed reaction is sulfate + ATP + H(+) = adenosine 5'-phosphosulfate + diphosphate. The protein operates within sulfur metabolism; hydrogen sulfide biosynthesis; sulfite from sulfate: step 1/3. With CysN forms the ATP sulfurylase (ATPS) that catalyzes the adenylation of sulfate producing adenosine 5'-phosphosulfate (APS) and diphosphate, the first enzymatic step in sulfur assimilation pathway. APS synthesis involves the formation of a high-energy phosphoric-sulfuric acid anhydride bond driven by GTP hydrolysis by CysN coupled to ATP hydrolysis by CysD. This Geotalea uraniireducens (strain Rf4) (Geobacter uraniireducens) protein is Sulfate adenylyltransferase subunit 2.